A 191-amino-acid polypeptide reads, in one-letter code: Pyridoxal 5'-phosphate synthase subunit PdxT (191 aa).

Glycine 52 to serine 54 contacts L-glutamine. Catalysis depends on cysteine 81, which acts as the Nucleophile. Residues arginine 108 and isoleucine 136–arginine 137 each bind L-glutamine. Active-site charge relay system residues include histidine 172 and glutamate 174.

This sequence belongs to the glutaminase PdxT/SNO family. As to quaternary structure, in the presence of PdxS, forms a dodecamer of heterodimers. Only shows activity in the heterodimer.

It catalyses the reaction aldehydo-D-ribose 5-phosphate + D-glyceraldehyde 3-phosphate + L-glutamine = pyridoxal 5'-phosphate + L-glutamate + phosphate + 3 H2O + H(+). It carries out the reaction L-glutamine + H2O = L-glutamate + NH4(+). It functions in the pathway cofactor biosynthesis; pyridoxal 5'-phosphate biosynthesis. Functionally, catalyzes the hydrolysis of glutamine to glutamate and ammonia as part of the biosynthesis of pyridoxal 5'-phosphate. The resulting ammonia molecule is channeled to the active site of PdxS. The sequence is that of Pyridoxal 5'-phosphate synthase subunit PdxT from Actinobacillus pleuropneumoniae serotype 5b (strain L20).